The sequence spans 70 residues: Cytochrome c oxidase subunit 8B, mitochondrial (70 aa).

The transit peptide at methionine 1–arginine 24 directs the protein to the mitochondrion. Topologically, residues isoleucine 25–serine 35 are mitochondrial matrix. Residues alanine 36 to serine 59 traverse the membrane as a helical segment. Topologically, residues histidine 60–alanine 70 are mitochondrial intermembrane.

Belongs to the cytochrome c oxidase VIII family. Component of the cytochrome c oxidase (complex IV, CIV), a multisubunit enzyme composed of 14 subunits. The complex is composed of a catalytic core of 3 subunits MT-CO1, MT-CO2 and MT-CO3, encoded in the mitochondrial DNA, and 11 supernumerary subunits COX4I, COX5A, COX5B, COX6A, COX6B, COX6C, COX7A, COX7B, COX7C, COX8 and NDUFA4, which are encoded in the nuclear genome. The complex exists as a monomer or a dimer and forms supercomplexes (SCs) in the inner mitochondrial membrane with NADH-ubiquinone oxidoreductase (complex I, CI) and ubiquinol-cytochrome c oxidoreductase (cytochrome b-c1 complex, complex III, CIII), resulting in different assemblies (supercomplex SCI(1)III(2)IV(1) and megacomplex MCI(2)III(2)IV(2)).

The protein localises to the mitochondrion inner membrane. The protein operates within energy metabolism; oxidative phosphorylation. Component of the cytochrome c oxidase, the last enzyme in the mitochondrial electron transport chain which drives oxidative phosphorylation. The respiratory chain contains 3 multisubunit complexes succinate dehydrogenase (complex II, CII), ubiquinol-cytochrome c oxidoreductase (cytochrome b-c1 complex, complex III, CIII) and cytochrome c oxidase (complex IV, CIV), that cooperate to transfer electrons derived from NADH and succinate to molecular oxygen, creating an electrochemical gradient over the inner membrane that drives transmembrane transport and the ATP synthase. Cytochrome c oxidase is the component of the respiratory chain that catalyzes the reduction of oxygen to water. Electrons originating from reduced cytochrome c in the intermembrane space (IMS) are transferred via the dinuclear copper A center (CU(A)) of subunit 2 and heme A of subunit 1 to the active site in subunit 1, a binuclear center (BNC) formed by heme A3 and copper B (CU(B)). The BNC reduces molecular oxygen to 2 water molecules using 4 electrons from cytochrome c in the IMS and 4 protons from the mitochondrial matrix. The protein is Cytochrome c oxidase subunit 8B, mitochondrial (Cox8b) of Rattus norvegicus (Rat).